The sequence spans 245 residues: Octanoyltransferase (245 aa).

In terms of domain architecture, BPL/LPL catalytic spans 54–242; it reads QNAPEQVWLL…AFEQIFGPTI (189 aa). Substrate is bound by residues 93-100, 173-175, and 186-188; these read RGGEFTYH, AIG, and GVS. Catalysis depends on C204, which acts as the Acyl-thioester intermediate.

The protein belongs to the LipB family.

The protein localises to the cytoplasm. It catalyses the reaction octanoyl-[ACP] + L-lysyl-[protein] = N(6)-octanoyl-L-lysyl-[protein] + holo-[ACP] + H(+). Its pathway is protein modification; protein lipoylation via endogenous pathway; protein N(6)-(lipoyl)lysine from octanoyl-[acyl-carrier-protein]: step 1/2. Catalyzes the transfer of endogenously produced octanoic acid from octanoyl-acyl-carrier-protein onto the lipoyl domains of lipoate-dependent enzymes. Lipoyl-ACP can also act as a substrate although octanoyl-ACP is likely to be the physiological substrate. This Bartonella quintana (strain Toulouse) (Rochalimaea quintana) protein is Octanoyltransferase.